Consider the following 580-residue polypeptide: Phosphatase and actin regulator 1 (580 aa).

Residues S67 and S78 each carry the phosphoserine modification. Phosphothreonine is present on T104. The short motif at 108-129 (RRRSKFANLGRIFKPWKWRKKK) is the Nuclear localization signal element. Residues 138-163 (AALERKISMRQSREELIKRGVLKEIY) form an RPEL 1 repeat. Disordered stretches follow at residues 330–350 (SEQR…SSDG) and 374–408 (DNKE…DDAS). Residues 337–348 (STSYHSSGLHSS) are compositionally biased toward low complexity. Residues 374 to 383 (DNKENVPHEP) show a composition bias toward basic and acidic residues. Residues 395-407 (EEEEEEEDEDDDA) show a composition bias toward acidic residues. RPEL repeat units lie at residues 422-447 (DSLA…PRQT), 460-485 (TKLT…KPRN), and 498-523 (RRLT…IRFS). The disordered stretch occupies residues 463 to 494 (TRRLSQRPTAEELEQRNILKPRNEQEEQEEKR). S467 is subject to Phosphoserine. The span at 471–494 (TAEELEQRNILKPRNEQEEQEEKR) shows a compositional bias: basic and acidic residues. The residue at position 505 (S505) is a Phosphoserine.

This sequence belongs to the phosphatase and actin regulator family. In terms of assembly, interacts (via RPEL repeats) with ACTA1 and PPP1CA; ACTA1 and PPP1CA compete for the same binding site.

Its subcellular location is the cytoplasm. The protein localises to the synapse. The protein resides in the nucleus. Its function is as follows. Binds actin monomers (G actin) and plays a role in multiple processes including the regulation of actin cytoskeleton dynamics, actin stress fibers formation, cell motility and survival, formation of tubules by endothelial cells, and regulation of PPP1CA activity. Involved in the regulation of cortical neuron migration and dendrite arborization. The polypeptide is Phosphatase and actin regulator 1 (Phactr1) (Mus musculus (Mouse)).